We begin with the raw amino-acid sequence, 101 residues long: Phosphoribosyl-AMP cyclohydrolase (101 aa).

Residue Asp-71 coordinates Mg(2+). Residue Cys-72 participates in Zn(2+) binding. Positions 73 and 75 each coordinate Mg(2+). Residues Cys-88 and Cys-95 each coordinate Zn(2+).

It belongs to the PRA-CH family. In terms of assembly, homodimer. The cofactor is Mg(2+). It depends on Zn(2+) as a cofactor.

It localises to the cytoplasm. It catalyses the reaction 1-(5-phospho-beta-D-ribosyl)-5'-AMP + H2O = 1-(5-phospho-beta-D-ribosyl)-5-[(5-phospho-beta-D-ribosylamino)methylideneamino]imidazole-4-carboxamide. It participates in amino-acid biosynthesis; L-histidine biosynthesis; L-histidine from 5-phospho-alpha-D-ribose 1-diphosphate: step 3/9. Catalyzes the hydrolysis of the adenine ring of phosphoribosyl-AMP. This Bacillus cereus (strain AH820) protein is Phosphoribosyl-AMP cyclohydrolase.